The primary structure comprises 206 residues: Uridine kinase (206 aa).

11 to 18 is an ATP binding site; that stretch reads GGTGSGKS.

The protein belongs to the uridine kinase family.

It is found in the cytoplasm. It catalyses the reaction uridine + ATP = UMP + ADP + H(+). It carries out the reaction cytidine + ATP = CMP + ADP + H(+). Its pathway is pyrimidine metabolism; CTP biosynthesis via salvage pathway; CTP from cytidine: step 1/3. It participates in pyrimidine metabolism; UMP biosynthesis via salvage pathway; UMP from uridine: step 1/1. This Clostridium botulinum (strain 657 / Type Ba4) protein is Uridine kinase.